We begin with the raw amino-acid sequence, 88 residues long: Small ribosomal subunit protein uS15 (88 aa).

Belongs to the universal ribosomal protein uS15 family. In terms of assembly, part of the 30S ribosomal subunit. Forms a bridge to the 50S subunit in the 70S ribosome, contacting the 23S rRNA.

Functionally, one of the primary rRNA binding proteins, it binds directly to 16S rRNA where it helps nucleate assembly of the platform of the 30S subunit by binding and bridging several RNA helices of the 16S rRNA. In terms of biological role, forms an intersubunit bridge (bridge B4) with the 23S rRNA of the 50S subunit in the ribosome. This chain is Small ribosomal subunit protein uS15, found in Geotalea daltonii (strain DSM 22248 / JCM 15807 / FRC-32) (Geobacter daltonii).